A 417-amino-acid chain; its full sequence is Leucine-rich repeat-containing protein 42 (417 aa).

LRR repeat units follow at residues 167 to 188 (CLHS…LAHL), 195 to 215 (SLTE…QKMT), 227 to 248 (KLKV…CFLF), and 252 to 273 (LLKF…LKKI). The disordered stretch occupies residues 360-390 (FFRPKEQKDPDSSNSEKRRHSTKRTGADCVQ). Positions 362-375 (RPKEQKDPDSSNSE) are enriched in basic and acidic residues.

It belongs to the LRRC42 family.

The polypeptide is Leucine-rich repeat-containing protein 42 (lrrc42) (Xenopus laevis (African clawed frog)).